Consider the following 311-residue polypeptide: tRNA-cytidine(32) 2-sulfurtransferase (311 aa).

The PP-loop motif signature appears at 47–52; it reads SGGKDS. 3 residues coordinate [4Fe-4S] cluster: C122, C125, and C213.

It belongs to the TtcA family. Homodimer. It depends on Mg(2+) as a cofactor. [4Fe-4S] cluster serves as cofactor.

It is found in the cytoplasm. It carries out the reaction cytidine(32) in tRNA + S-sulfanyl-L-cysteinyl-[cysteine desulfurase] + AH2 + ATP = 2-thiocytidine(32) in tRNA + L-cysteinyl-[cysteine desulfurase] + A + AMP + diphosphate + H(+). The protein operates within tRNA modification. Its function is as follows. Catalyzes the ATP-dependent 2-thiolation of cytidine in position 32 of tRNA, to form 2-thiocytidine (s(2)C32). The sulfur atoms are provided by the cysteine/cysteine desulfurase (IscS) system. The polypeptide is tRNA-cytidine(32) 2-sulfurtransferase (Salmonella paratyphi A (strain ATCC 9150 / SARB42)).